A 189-amino-acid polypeptide reads, in one-letter code: Selenoprotein S (189 aa).

Residues S28–F48 traverse the membrane as a helical segment. The interval R78 to Q90 is VCP/p97-interacting motif (VIM). The segment at K115–G189 is disordered. S140 carries the post-translational modification Phosphoserine. Over residues R159 to A173 the composition is skewed to gly residues. Residue U188 is a non-standard amino acid, selenocysteine.

It belongs to the selenoprotein S family. As to quaternary structure, interacts with DERL1 and (via VIM motif) with VCP, suggesting that it forms a membrane complex with DERL1 that serves as a receptor for VCP. Also interacts with DERL2, DERL3 and SELENOK. The SELENOK-SELENOS complex interacts with VCP. Interacts with CCDC47. Post-translationally, truncated SELENOS proteins produced by failed UGA/Sec decoding are ubiquitinated by the CRL2(KLHDC2) and CRL2(KLHDC3) complexes, which recognizes the glycine (Gly) at the C-terminus of truncated SELENOS proteins. Truncated SELENOS proteins produced by failed UGA/Sec decoding are also ubiquitinated by the CRL5(KLHDC1) complex.

The protein localises to the endoplasmic reticulum membrane. It localises to the cytoplasm. Functionally, involved in the degradation process of misfolded endoplasmic reticulum (ER) luminal proteins. Participates in the transfer of misfolded proteins from the ER to the cytosol, where they are destroyed by the proteasome in a ubiquitin-dependent manner. Probably acts by serving as a linker between DERL1, which mediates the retrotranslocation of misfolded proteins into the cytosol, and the ATPase complex VCP, which mediates the translocation and ubiquitination. The sequence is that of Selenoprotein S from Homo sapiens (Human).